A 522-amino-acid chain; its full sequence is Aspartic and glutamic acid-rich protein (522 aa).

The signal sequence occupies residues 1 to 16 (MKVFVYLLVTFSLTNA). 2 stretches are compositionally biased toward basic and acidic residues: residues 72-81 (YDDFFPKDTS) and 93-102 (SRNDDGYDLA). A disordered region spans residues 72–497 (YDDFFPKDTS…KSKDAAQGNI (426 aa)). The segment covering 109-125 (DDEEAYDDFDEVDDRAD) has biased composition (acidic residues). The span at 142–152 (KLPAEEESKND) shows a compositional bias: basic and acidic residues. Composition is skewed to acidic residues over residues 153–166 (MDEE…EEDK), 173–200 (FAED…EDEV), 228–261 (DNEE…DESD), and 267–283 (EVED…TEEG). A compositionally biased stretch (basic and acidic residues) spans 284-343 (SEIKQNDETEEQPEKKFDADKEHEDAPEPLKEKLSDESKARAEDESDKSEDAAKEIKEPE). The stretch at 319–465 (DESKARAEDE…KSNLALKRDE (147 aa)) forms a coiled coil. Over residues 358-374 (DEAELLDDEAELSDDEA) the composition is skewed to acidic residues. Composition is skewed to basic and acidic residues over residues 375 to 397 (ELSK…KAEK), 407 to 453 (DEAK…EFAK), and 461 to 491 (LKRD…KSKD).

Component of the acid-soluble organic matrix of the aragonitic skeleton (at protein level).

The protein localises to the secreted. In Acropora millepora (Staghorn coral), this protein is Aspartic and glutamic acid-rich protein.